A 276-amino-acid polypeptide reads, in one-letter code: Undecaprenyl-diphosphatase (276 aa).

A run of 7 helical transmembrane segments spans residues 48–68 (AANS…AIVF), 92–112 (LSIA…FLFE), 119–139 (LFSV…MLFA), 155–175 (ISYK…WPGF), 196–216 (ADFT…LSLV), 225–245 (DLMP…LFVV), and 255–275 (IKLV…LLIM).

This sequence belongs to the UppP family.

It localises to the cell membrane. The enzyme catalyses di-trans,octa-cis-undecaprenyl diphosphate + H2O = di-trans,octa-cis-undecaprenyl phosphate + phosphate + H(+). Catalyzes the dephosphorylation of undecaprenyl diphosphate (UPP). Confers resistance to bacitracin. This is Undecaprenyl-diphosphatase from Bacillus subtilis (strain 168).